The following is a 167-amino-acid chain: SsrA-binding protein (167 aa).

The interval 144 to 167 (HDKRAADKEKQSKKEVRSAMAKYQ) is disordered. The segment covering 146 to 160 (KRAADKEKQSKKEVR) has biased composition (basic and acidic residues).

The protein belongs to the SmpB family.

It localises to the cytoplasm. Required for rescue of stalled ribosomes mediated by trans-translation. Binds to transfer-messenger RNA (tmRNA), required for stable association of tmRNA with ribosomes. tmRNA and SmpB together mimic tRNA shape, replacing the anticodon stem-loop with SmpB. tmRNA is encoded by the ssrA gene; the 2 termini fold to resemble tRNA(Ala) and it encodes a 'tag peptide', a short internal open reading frame. During trans-translation Ala-aminoacylated tmRNA acts like a tRNA, entering the A-site of stalled ribosomes, displacing the stalled mRNA. The ribosome then switches to translate the ORF on the tmRNA; the nascent peptide is terminated with the 'tag peptide' encoded by the tmRNA and targeted for degradation. The ribosome is freed to recommence translation, which seems to be the essential function of trans-translation. The protein is SsrA-binding protein of Synechococcus sp. (strain CC9902).